Reading from the N-terminus, the 187-residue chain is MTSRSLLPFVLSLLLPRIIMAQSYLELYSHQWLNNWKSLHLLNELDGQFPLHCLKESMNFKLPAEMLHPHQFQQENATEAIHDLLQQIFNIFSRNHSQTGWDEAIVEKFLHGVHQEMVWLELFLEEEMGWENSTLRRDISLHIKSYFKRMMDYLKGRNYSSCAWEVIRMETKRSCLVIYRLTRKLKK.

The N-terminal stretch at 1–21 (MTSRSLLPFVLSLLLPRIIMA) is a signal peptide. Tyr24 is modified (phosphotyrosine). Cys53 and Cys162 are oxidised to a cystine. N-linked (GlcNAc...) asparagine glycosylation is found at Asn76, Asn95, Asn132, and Asn158.

Belongs to the alpha/beta interferon family. In terms of assembly, monomer.

It is found in the secreted. Functionally, type I interferon cytokine that plays a key role in the innate immune response to infection, developing tumors and other inflammatory stimuli. Signals via binding to high-affinity (IFNAR2) and low-affinity (IFNAR1) heterodimeric receptor, activating the canonical Jak-STAT signaling pathway resulting in transcriptional activation or repression of interferon-regulated genes that encode the effectors of the interferon response, such as antiviral proteins, regulators of cell proliferation and differentiation, and immunoregulatory proteins. Signals mostly via binding to a IFNAR1-IFNAR2 heterodimeric receptor, but can also function with IFNAR1 alone and independently of Jak-STAT pathways. Elicits a wide variety of responses, including antiviral and antibacterial activities, and can regulate the development of B-cells, myelopoiesis and lipopolysaccharide (LPS)-inducible production of tumor necrosis factor. Plays a role in neuronal homeostasis by regulating dopamine turnover and protecting dopaminergic neurons: acts by promoting neuronal autophagy and alpha-synuclein clearance, thereby preventing dopaminergic neuron loss. IFNB1 is more potent than interferon-alpha (IFN-alpha) in inducing the apoptotic and antiproliferative pathways required for control of tumor cell growth. This Tachyglossus aculeatus aculeatus (Southeast Australian short-beaked echidna) protein is Interferon beta (IFNB1).